The following is a 324-amino-acid chain: 4-hydroxy-2-oxoglutarate aldolase, mitochondrial (324 aa).

A mitochondrion-targeting transit peptide spans 1-22 (MFAHRSFSLLCRRSAVTSWRSQ). 74–75 (SN) serves as a coordination point for substrate. The Schiff-base intermediate with substrate role is filled by K193. Positions 195 and 219 each coordinate substrate.

The protein belongs to the DapA family. As to quaternary structure, homotetramer.

The protein resides in the mitochondrion. It catalyses the reaction (4S)-4-hydroxy-2-oxoglutarate = glyoxylate + pyruvate. The catalysed reaction is (4R)-4-hydroxy-2-oxoglutarate = glyoxylate + pyruvate. With respect to regulation, inhibited by divalent cations. Its function is as follows. Catalyzes the final step in the metabolic pathway of hydroxyproline. The polypeptide is 4-hydroxy-2-oxoglutarate aldolase, mitochondrial (Danio rerio (Zebrafish)).